A 392-amino-acid polypeptide reads, in one-letter code: Phospho-N-acetylmuramoyl-pentapeptide-transferase (392 aa).

A run of 11 helical transmembrane segments spans residues 24-44 (YLTM…LLAG), 76-96 (TMGG…WFDL), 100-120 (FVWI…VDDW), 137-157 (YFWQ…CISE), 170-190 (WVQS…VPFF), 193-213 (VSYP…IVGA), 225-245 (GLAI…AYVT), 262-282 (SGEL…FLWF), 289-309 (VFMG…IAVI), 314-334 (IVLA…MLQV), and 369-389 (QVVI…LSTL).

This sequence belongs to the glycosyltransferase 4 family. MraY subfamily. Mg(2+) serves as cofactor.

The protein resides in the cell inner membrane. The enzyme catalyses UDP-N-acetyl-alpha-D-muramoyl-L-alanyl-gamma-D-glutamyl-meso-2,6-diaminopimeloyl-D-alanyl-D-alanine + di-trans,octa-cis-undecaprenyl phosphate = di-trans,octa-cis-undecaprenyl diphospho-N-acetyl-alpha-D-muramoyl-L-alanyl-D-glutamyl-meso-2,6-diaminopimeloyl-D-alanyl-D-alanine + UMP. Its pathway is cell wall biogenesis; peptidoglycan biosynthesis. Functionally, catalyzes the initial step of the lipid cycle reactions in the biosynthesis of the cell wall peptidoglycan: transfers peptidoglycan precursor phospho-MurNAc-pentapeptide from UDP-MurNAc-pentapeptide onto the lipid carrier undecaprenyl phosphate, yielding undecaprenyl-pyrophosphoryl-MurNAc-pentapeptide, known as lipid I. The protein is Phospho-N-acetylmuramoyl-pentapeptide-transferase of Delftia acidovorans (strain DSM 14801 / SPH-1).